A 163-amino-acid chain; its full sequence is uncharacterized protein (163 aa).

4 4Fe-4S ferredoxin-type domains span residues 30–59, 61–90, 105–136, and 136–163; these read REIIVKEDKCISCGKCIEICPVNAITYSSD, LYITINKEKCVFCGKCKKVCPTNAIVIIRL, KYEFIDYISERCASCLVCLRNCPFNAIEEYGS, and SKIRIDINKCELCGKCEEICPLNAIILR. Cysteine 39, cysteine 42, cysteine 45, cysteine 49, cysteine 70, cysteine 73, cysteine 76, cysteine 80, cysteine 116, cysteine 119, cysteine 122, cysteine 126, cysteine 145, cysteine 148, cysteine 151, and cysteine 155 together coordinate [4Fe-4S] cluster.

This is an uncharacterized protein from Methanocaldococcus jannaschii (strain ATCC 43067 / DSM 2661 / JAL-1 / JCM 10045 / NBRC 100440) (Methanococcus jannaschii).